The chain runs to 402 residues: Septin CDC11 (402 aa).

The residue at position 1 (M1) is an N-acetylmethionine. S4 carries the post-translational modification Phosphoserine. Residues 14–21 carry the Basic motif motif; it reads RKRKTLKK. The Septin-type G domain maps to 21–307; sequence KSINFSIMII…ENYRTEALSG (287 aa). The G1 motif stretch occupies residues 31–38; the sequence is GESGSGRS. 31–38 provides a ligand contact to GTP; it reads GESGSGRS. The interval 89 to 92 is G3 motif; that stretch reads DTPN. The G4 motif stretch occupies residues 171 to 174; it reads SKAD. Residues 172-180 and G233 each bind GTP; that span reads KADSLTPKE. Residues 318–376 are a coiled coil; it reads AKQEISESDYLMKEEQIKLEEERLRKFEERVHQDLINKRKELLERENELKEIEKRLLAE. Phosphoserine; by CDC28 is present on S394. At S395 the chain carries Phosphoserine; by GIN4.

This sequence belongs to the TRAFAC class TrmE-Era-EngA-EngB-Septin-like GTPase superfamily. Septin GTPase family. As to quaternary structure, component of the septin complex which consists of CDC3, CDC10, CDC11, CDC12 and probably SEP7. The purified septin complex appeared to have a stoichiometry of 2 CDC3, 1 to 2 CDC10, 1 CDC11, 2 CDC12, and 1 or none SEP7 subunit. Interacts with HSL1. Post-translationally, hyphal induction causes immediate phosphorylation at Ser-395 by GIN4 and at Ser-394 by CDC28-CCN1. GIN4 phosphorylation at Ser-395 primes CDC11 for further phosphorylation by CDC28-CCN1. CDC28-HGC1 then maintains CDC11 phosphorylation throughout hyphal growth. Ser-4 is also phosphorylated in yeast cells but not hyphal cells. Met-1 is acetylated.

It is found in the bud neck. Septins are GTPases involved in cytokinesis that assemble early in the cell cycle as a patch at the incipient bud site and form a ring before bud emergence, which transforms into an hour-glass shaped collar of cortical filaments that spans both sides of the mother-bud neck. This collar persists until just before cytokinesis, when it splits into two rings that occupy opposite sides of the neck. The septins at the bud neck serve as a structural scaffold that recruits different components involved in diverse processes at specific stages during the cell cycle. Many proteins bind asymmetrically to the septin collar. The septin assembly is regulated by protein kinase GIN4. Septins are also involved in cell morphogenesis, chlamydospores morphogenesis, bud site selection, chitin deposition, cell cycle regulation, cell compartmentalization, and spore wall formation. CDC11 is required for the correct localization of SEC3 at bud tips and bud necks. Plays a key role in invasive growth and virulence. This Candida albicans (strain SC5314 / ATCC MYA-2876) (Yeast) protein is Septin CDC11 (CDC11).